The chain runs to 253 residues: Prolactin-7A2 (253 aa).

Residues 1-30 form the signal peptide; sequence MSFSFSQPCPSGALLLVVVSSLLLWENVAS. Asparagine 36, asparagine 103, and asparagine 135 each carry an N-linked (GlcNAc...) asparagine glycan. 2 disulfides stabilise this stretch: cysteine 101/cysteine 218 and cysteine 235/cysteine 244.

The protein belongs to the somatotropin/prolactin family. Expression restricted to the placental tissue. Expressed only in the spongiotrophoblasts.

Its subcellular location is the secreted. The sequence is that of Prolactin-7A2 (Prl7a2) from Mus musculus (Mouse).